A 1016-amino-acid polypeptide reads, in one-letter code: FHIP family protein Bm1_18400 (1016 aa).

Disordered regions lie at residues aspartate 586–phenylalanine 608 and serine 757–lysine 778.

The protein belongs to the FHIP family.

The chain is FHIP family protein Bm1_18400 from Brugia malayi (Filarial nematode worm).